We begin with the raw amino-acid sequence, 180 residues long: NAD(P)H-quinone oxidoreductase subunit I, chloroplastic (180 aa).

4Fe-4S ferredoxin-type domains are found at residues 55-84 (GRIH…VDWR) and 95-124 (LNYS…MTEE). 8 residues coordinate [4Fe-4S] cluster: C64, C67, C70, C74, C104, C107, C110, and C114.

Belongs to the complex I 23 kDa subunit family. As to quaternary structure, NDH is composed of at least 16 different subunits, 5 of which are encoded in the nucleus. The cofactor is [4Fe-4S] cluster.

It is found in the plastid. The protein localises to the chloroplast thylakoid membrane. It catalyses the reaction a plastoquinone + NADH + (n+1) H(+)(in) = a plastoquinol + NAD(+) + n H(+)(out). It carries out the reaction a plastoquinone + NADPH + (n+1) H(+)(in) = a plastoquinol + NADP(+) + n H(+)(out). Its function is as follows. NDH shuttles electrons from NAD(P)H:plastoquinone, via FMN and iron-sulfur (Fe-S) centers, to quinones in the photosynthetic chain and possibly in a chloroplast respiratory chain. The immediate electron acceptor for the enzyme in this species is believed to be plastoquinone. Couples the redox reaction to proton translocation, and thus conserves the redox energy in a proton gradient. This is NAD(P)H-quinone oxidoreductase subunit I, chloroplastic from Illicium oligandrum (Star anise).